Consider the following 215-residue polypeptide: Large ribosomal subunit protein uL4 (215 aa).

Residues 46–76 form a disordered region; sequence TAKSKNRAEVSGGGRKPWAQKGGGRARAGSI. Over residues 56–71 the composition is skewed to gly residues; that stretch reads SGGGRKPWAQKGGGRA.

This sequence belongs to the universal ribosomal protein uL4 family. Part of the 50S ribosomal subunit.

In terms of biological role, one of the primary rRNA binding proteins, this protein initially binds near the 5'-end of the 23S rRNA. It is important during the early stages of 50S assembly. It makes multiple contacts with different domains of the 23S rRNA in the assembled 50S subunit and ribosome. Its function is as follows. Forms part of the polypeptide exit tunnel. The chain is Large ribosomal subunit protein uL4 from Helicobacter pylori (strain HPAG1).